A 306-amino-acid chain; its full sequence is MNTTPYLEIKEEVYQALKENRPIVALESTIISHGMPYPQNVEVAKNVEETIRERGAVPATIAIIDGKMKVGLSKEELEFMATSKNILKASRMDLPVILAKGFNAATTVAATMIIAELAGIKVFVTGGIGGVHRNAQETFDISADLQELAKTNVAVISAGPKAILDLQLTKEYLETFGVPVIGYQTDELPCFFSRESGINVPYRVETPKEIASIMKTKWDLGLQGGIFIANPIPKEYSLDFEEIDKTIENAIEEAKKRKIKGKELTPFLLSKINELTKGESLKANIELVYNNAQLGAEIAKEFNILS.

The Proton donor role is filled by E27. Substrate is bound by residues K88 and V108. D140 serves as a coordination point for Mn(2+). 142 to 144 (SAD) serves as a coordination point for substrate. K161 functions as the Nucleophile in the catalytic mechanism.

The protein belongs to the pseudouridine-5'-phosphate glycosidase family. As to quaternary structure, homotrimer. Mn(2+) is required as a cofactor.

It carries out the reaction D-ribose 5-phosphate + uracil = psi-UMP + H2O. Functionally, catalyzes the reversible cleavage of pseudouridine 5'-phosphate (PsiMP) to ribose 5-phosphate and uracil. Functions biologically in the cleavage direction, as part of a pseudouridine degradation pathway. The sequence is that of Pseudouridine-5'-phosphate glycosidase from Petrotoga mobilis (strain DSM 10674 / SJ95).